A 334-amino-acid polypeptide reads, in one-letter code: Glyceraldehyde-3-phosphate dehydrogenase 1 (334 aa).

NAD(+) is bound by residues 11 to 12 (RI), D33, R77, and S119. Residues 150-152 (SCT) and T181 each bind D-glyceraldehyde 3-phosphate. The active-site Nucleophile is C151. Position 182 (N182) interacts with NAD(+). Residues R196, 209 to 210 (TG), and R232 contribute to the D-glyceraldehyde 3-phosphate site. An NAD(+)-binding site is contributed by N314.

It belongs to the glyceraldehyde-3-phosphate dehydrogenase family. Homotetramer.

The protein resides in the cytoplasm. The enzyme catalyses D-glyceraldehyde 3-phosphate + phosphate + NAD(+) = (2R)-3-phospho-glyceroyl phosphate + NADH + H(+). It participates in carbohydrate degradation; glycolysis; pyruvate from D-glyceraldehyde 3-phosphate: step 1/5. Functionally, catalyzes the oxidative phosphorylation of glyceraldehyde 3-phosphate (G3P) to 1,3-bisphosphoglycerate (BPG) using the cofactor NAD. The first reaction step involves the formation of a hemiacetal intermediate between G3P and a cysteine residue, and this hemiacetal intermediate is then oxidized to a thioester, with concomitant reduction of NAD to NADH. The reduced NADH is then exchanged with the second NAD, and the thioester is attacked by a nucleophilic inorganic phosphate to produce BPG. This chain is Glyceraldehyde-3-phosphate dehydrogenase 1 (gap1), found in Bacillus cereus.